A 185-amino-acid polypeptide reads, in one-letter code: UPF0301 protein Shew_1144 (185 aa).

This sequence belongs to the UPF0301 (AlgH) family.

The protein is UPF0301 protein Shew_1144 of Shewanella loihica (strain ATCC BAA-1088 / PV-4).